A 248-amino-acid chain; its full sequence is Large ribosomal subunit protein uL4 (248 aa).

2 disordered regions span residues Gly48–Arg96 and Ala210–Ala248. The span at Asp233 to Ala248 shows a compositional bias: basic and acidic residues.

Belongs to the universal ribosomal protein uL4 family. Part of the 50S ribosomal subunit.

In terms of biological role, one of the primary rRNA binding proteins, this protein initially binds near the 5'-end of the 23S rRNA. It is important during the early stages of 50S assembly. It makes multiple contacts with different domains of the 23S rRNA in the assembled 50S subunit and ribosome. Forms part of the polypeptide exit tunnel. The sequence is that of Large ribosomal subunit protein uL4 from Tropheryma whipplei (strain Twist) (Whipple's bacillus).